A 246-amino-acid chain; its full sequence is Large ribosomal subunit protein uL30-like 1 (246 aa).

The residue at position 54 (Ser-54) is a Phosphoserine.

It belongs to the universal ribosomal protein uL30 family.

The polypeptide is Large ribosomal subunit protein uL30-like 1 (Rpl7l1) (Mus musculus (Mouse)).